We begin with the raw amino-acid sequence, 379 residues long: MHKTEAQTYLLYDRTLLLLTMGLVGIGLVMVISTSMPIGVRLSEDPFYFARRYAFYLGLAVVLSLVTLGIPMASWQRGSSLILLITLIMLLLVLIAGQSVNGAVRWLALGPWRIQPAELSKLALFCYLASYLVRKAEEVRTNFWGFCKPIGVMVLLAILLLAQPDLGTVLVLFITTLAMLFLAEAKIWQFLPIIGTGILAVMLLIIAKPYRRRRVTSFLNPWDDPFGRGYQLTNSLIAFGRGELWGQGLGNSIQKFEYLTEAHTDFICSILGEELGYFGVLLALLMVFLVAFRAMSIGRKALAINQIFSGFLACSIGIWFSFQTMVNVGAAAGMLPTKGLTLPFISYGGSSMLIMLTAIVLLIRIDFETRLAKLQAFVR.

Residues 1–15 (MHKTEAQTYLLYDRT) lie on the Cytoplasmic side of the membrane. A helical transmembrane segment spans residues 16-36 (LLLLTMGLVGIGLVMVISTSM). The Periplasmic segment spans residues 37–52 (PIGVRLSEDPFYFARR). Residues 53-73 (YAFYLGLAVVLSLVTLGIPMA) traverse the membrane as a helical segment. Over 74-79 (SWQRGS) the chain is Cytoplasmic. The chain crosses the membrane as a helical span at residues 80–100 (SLILLITLIMLLLVLIAGQSV). Topologically, residues 101-113 (NGAVRWLALGPWR) are periplasmic. A helical membrane pass occupies residues 114–133 (IQPAELSKLALFCYLASYLV). Residues 134 to 139 (RKAEEV) are Cytoplasmic-facing. Residues 140–162 (RTNFWGFCKPIGVMVLLAILLLA) traverse the membrane as a helical segment. Residues 163-165 (QPD) are Periplasmic-facing. Residues 166–183 (LGTVLVLFITTLAMLFLA) form a helical membrane-spanning segment. Residues 184-186 (EAK) lie on the Cytoplasmic side of the membrane. Residues 187 to 207 (IWQFLPIIGTGILAVMLLIIA) form a helical membrane-spanning segment. Residues 208 to 269 (KPYRRRRVTS…TEAHTDFICS (62 aa)) lie on the Periplasmic side of the membrane. A helical transmembrane segment spans residues 270–290 (ILGEELGYFGVLLALLMVFLV). Topologically, residues 291–301 (AFRAMSIGRKA) are cytoplasmic. The chain crosses the membrane as a helical span at residues 302–322 (LAINQIFSGFLACSIGIWFSF). Residues 323-342 (QTMVNVGAAAGMLPTKGLTL) are Periplasmic-facing. Residues 343–363 (PFISYGGSSMLIMLTAIVLLI) form a helical membrane-spanning segment. Over 364–379 (RIDFETRLAKLQAFVR) the chain is Cytoplasmic.

It belongs to the SEDS family. FtsW subfamily.

It is found in the cell inner membrane. The enzyme catalyses [GlcNAc-(1-&gt;4)-Mur2Ac(oyl-L-Ala-gamma-D-Glu-L-Lys-D-Ala-D-Ala)](n)-di-trans,octa-cis-undecaprenyl diphosphate + beta-D-GlcNAc-(1-&gt;4)-Mur2Ac(oyl-L-Ala-gamma-D-Glu-L-Lys-D-Ala-D-Ala)-di-trans,octa-cis-undecaprenyl diphosphate = [GlcNAc-(1-&gt;4)-Mur2Ac(oyl-L-Ala-gamma-D-Glu-L-Lys-D-Ala-D-Ala)](n+1)-di-trans,octa-cis-undecaprenyl diphosphate + di-trans,octa-cis-undecaprenyl diphosphate + H(+). It functions in the pathway cell wall biogenesis; peptidoglycan biosynthesis. In terms of biological role, peptidoglycan polymerase that is essential for cell division. The chain is Probable peptidoglycan glycosyltransferase FtsW from Moranella endobia (strain PCIT).